Here is a 340-residue protein sequence, read N- to C-terminus: Citramalyl-CoA lyase, mitochondrial (340 aa).

A mitochondrion-targeting transit peptide spans 1–22 (MALRLLRRAARGAAAAALLRLK). Y50, K57, and K61 together coordinate substrate. K57 and K61 each carry N6-acetyllysine. Residues K82 and K92 each carry the N6-acetyllysine; alternate modification. N6-succinyllysine; alternate is present on residues K82 and K92. R107 contributes to the substrate binding site. Residues E171 and D206 each contribute to the Mg(2+) site. Residue 272–273 (IH) participates in substrate binding. The residue at position 309 (K309) is an N6-succinyllysine. The active site involves D320.

It belongs to the HpcH/HpaI aldolase family. Citrate lyase beta subunit-like subfamily. Homotrimer. Requires Mg(2+) as cofactor.

The protein resides in the mitochondrion. It catalyses the reaction glyoxylate + acetyl-CoA + H2O = (S)-malate + CoA + H(+). It carries out the reaction propanoyl-CoA + glyoxylate + H2O = 3-methylmalate + CoA + H(+). The enzyme catalyses (3S)-citramalyl-CoA = pyruvate + acetyl-CoA. The catalysed reaction is (S)-malyl-CoA + H2O = (S)-malate + CoA + H(+). Functionally, mitochondrial citramalyl-CoA lyase indirectly involved in the vitamin B12 metabolism. Converts citramalyl-CoA into acetyl-CoA and pyruvate in the C5-dicarboxylate catabolism pathway. The C5-dicarboxylate catabolism pathway is required to detoxify itaconate, a vitamin B12-poisoning metabolite. Also acts as a malate synthase in vitro, converting glyoxylate and acetyl-CoA to malate. Also displays malyl-CoA thioesterase activity. Also acts as a beta-methylmalate synthase in vitro, by mediating conversion of glyoxylate and propionyl-CoA to beta-methylmalate. Also has very weak citramalate synthase activity in vitro. The protein is Citramalyl-CoA lyase, mitochondrial of Homo sapiens (Human).